Consider the following 231-residue polypeptide: ATP phosphoribosyltransferase (231 aa).

The protein belongs to the ATP phosphoribosyltransferase family. Short subfamily. In terms of assembly, heteromultimer composed of HisG and HisZ subunits.

It is found in the cytoplasm. It catalyses the reaction 1-(5-phospho-beta-D-ribosyl)-ATP + diphosphate = 5-phospho-alpha-D-ribose 1-diphosphate + ATP. It participates in amino-acid biosynthesis; L-histidine biosynthesis; L-histidine from 5-phospho-alpha-D-ribose 1-diphosphate: step 1/9. In terms of biological role, catalyzes the condensation of ATP and 5-phosphoribose 1-diphosphate to form N'-(5'-phosphoribosyl)-ATP (PR-ATP). Has a crucial role in the pathway because the rate of histidine biosynthesis seems to be controlled primarily by regulation of HisG enzymatic activity. This chain is ATP phosphoribosyltransferase, found in Brucella ovis (strain ATCC 25840 / 63/290 / NCTC 10512).